The following is a 553-amino-acid chain: ATP synthase F(1) complex subunit alpha, mitochondrial (553 aa).

The N-terminal 43 residues, 1–43, are a transit peptide targeting the mitochondrion; that stretch reads MLSVRIAAAVARALPRRAGLVSKNALGSSFVGTRNLHASNTRL. Phosphoserine is present on residues serine 53 and serine 65. A Phosphoserine; alternate modification is found at serine 76. Residue serine 76 is glycosylated (O-linked (GlcNAc) serine; alternate). Residue serine 106 is modified to Phosphoserine. N6-acetyllysine is present on residues lysine 123, lysine 126, and lysine 132. The residue at position 134 (threonine 134) is a Phosphothreonine. Lysine 161 carries the N6-acetyllysine; alternate modification. An N6-succinyllysine; alternate modification is found at lysine 161. Serine 166 is modified (phosphoserine). An N6-acetyllysine; alternate modification is found at lysine 167. N6-succinyllysine; alternate is present on lysine 167. At serine 184 the chain carries Phosphoserine. The residue at position 204 (arginine 204) is an Omega-N-methylarginine. ATP-binding residues include glutamine 215, glycine 217, lysine 218, threonine 219, and serine 220. Threonine 219 is a binding site for Mg(2+). Lysine 230 and lysine 239 each carry N6-acetyllysine; alternate. N6-succinyllysine; alternate occurs at positions 230 and 239. Lysine 240 carries the post-translational modification N6-acetyllysine. 2 positions are modified to N6-acetyllysine; alternate: lysine 261 and lysine 305. Lysine 261 and lysine 305 each carry N6-succinyllysine; alternate. Aspartate 312 is a binding site for Mg(2+). Lysine 427 bears the N6-acetyllysine; alternate mark. The residue at position 427 (lysine 427) is an N6-succinyllysine; alternate. Residue lysine 434 is modified to N6-acetyllysine. The ATP site is built by glutamine 473 and glutamine 475. Residues lysine 498, lysine 506, lysine 531, and lysine 539 each carry the N6-acetyllysine; alternate modification. N6-succinyllysine; alternate is present on residues lysine 498, lysine 506, lysine 531, and lysine 539. Position 541 is an N6-acetyllysine (lysine 541).

Belongs to the ATPase alpha/beta chains family. As to quaternary structure, homotrimer. Component of the ATP synthase complex composed at least of ATP5F1A/subunit alpha, ATP5F1B/subunit beta, ATP5MC1/subunit c (homooctomer), MT-ATP6/subunit a, MT-ATP8/subunit 8, ATP5ME/subunit e, ATP5MF/subunit f, ATP5MG/subunit g, ATP5MK/subunit k, ATP5MJ/subunit j, ATP5F1C/subunit gamma, ATP5F1D/subunit delta, ATP5F1E/subunit epsilon, ATP5PF/subunit F6, ATP5PB/subunit b, ATP5PD/subunit d, ATP5PO/subunit OSCP. ATP synthase complex consists of a soluble F(1) head domain (subunits alpha(3) and beta(3)) - the catalytic core - and a membrane F(0) domain - the membrane proton channel (subunits c, a, 8, e, f, g, k and j). These two domains are linked by a central stalk (subunits gamma, delta, and epsilon) rotating inside the F1 region and a stationary peripheral stalk (subunits F6, b, d, and OSCP). Interacts with ATPAF2. Interacts with HRG; the interaction occurs on the surface of T-cells and alters the cell morphology when associated with concanavalin (in vitro). Interacts with PLG (angiostatin peptide); the interaction inhibits most of the angiogenic properties of angiostatin. Interacts with BLOC1S1. Interacts with BCL2L1 isoform BCL-X(L); the interaction mediates the association of BCL2L1 isoform BCL-X(L) with the mitochondrial membrane F(1)F(0) ATP synthase and enhances neurons metabolic efficiency. Interacts with CLN5 and PPT1. Interacts with S100A1; this interaction increases F1-ATPase activity. Interacts with ABCB7; this interaction allows the regulation of cellular iron homeostasis and cellular reactive oxygen species (ROS) levels in cardiomyocytes. Acetylated on lysine residues. BLOC1S1 is required for acetylation. As to expression, expressed in flagella of epididymal sperm.

The protein resides in the mitochondrion. Its subcellular location is the mitochondrion inner membrane. It is found in the cell membrane. Functionally, subunit alpha, of the mitochondrial membrane ATP synthase complex (F(1)F(0) ATP synthase or Complex V) that produces ATP from ADP in the presence of a proton gradient across the membrane which is generated by electron transport complexes of the respiratory chain. ATP synthase complex consist of a soluble F(1) head domain - the catalytic core - and a membrane F(1) domain - the membrane proton channel. These two domains are linked by a central stalk rotating inside the F(1) region and a stationary peripheral stalk. During catalysis, ATP synthesis in the catalytic domain of F(1) is coupled via a rotary mechanism of the central stalk subunits to proton translocation. In vivo, can only synthesize ATP although its ATP hydrolase activity can be activated artificially in vitro. With the catalytic subunit beta (ATP5F1B), forms the catalytic core in the F(1) domain. Subunit alpha does not bear the catalytic high-affinity ATP-binding sites. This Rattus norvegicus (Rat) protein is ATP synthase F(1) complex subunit alpha, mitochondrial.